The chain runs to 399 residues: Glutathione S-transferase LANCL1 (399 aa).

An N-acetylalanine modification is found at Ala-2. Position 142 is an N6-acetyllysine (Lys-142). Cys-276 is a Zn(2+) binding site. Glutathione is bound at residue Lys-317. Zn(2+)-binding residues include Cys-322 and His-323. 364 to 367 (RTPD) is a binding site for glutathione.

This sequence belongs to the LanC-like protein family. In terms of assembly, interacts with the C-terminal of STOM. Interacts with the EPS8 SH3 domain. Interaction with EPS8 is inhibited by glutathione binding. Strongly expressed in the brain, testis and skeletal muscle. Expressed in the neurons of the cerebellum, the germinal cells of the seminiferous tubules in testis, in liver hepoatocytes and in cardiac myocytes.

The protein resides in the cytoplasm. Its subcellular location is the cell membrane. The enzyme catalyses RX + glutathione = an S-substituted glutathione + a halide anion + H(+). It carries out the reaction 1-chloro-2,4-dinitrobenzene + glutathione = 2,4-dinitrophenyl-S-glutathione + chloride + H(+). Functions as a glutathione transferase. Catalyzes conjugation of the glutathione (GSH) to artificial substrates 1-chloro-2,4-dinitrobenzene (CDNB) and p-nitrophenyl acetate. Mitigates neuronal oxidative stress during normal postnatal development and in response to oxidative stresses probably through GSH antioxidant defense mechanism. May play a role in EPS8 signaling. Binds glutathione. The chain is Glutathione S-transferase LANCL1 from Rattus norvegicus (Rat).